A 547-amino-acid polypeptide reads, in one-letter code: MSTDNIPTQLGIAGAVAVLLFLLRRWSSRSTLRNIPGPPPQSQWTGNLKQWFARDGADFQRDVSFNYGPVAKIHGFLGRPILYVADPKALQTILVKEEQVYQETKAFFAMTYLLFGPGLLATAGEKHRKQRKLLNPVFSIKHMRHMLPIFYGVLHKVRDAITMRVSDGPQEIDMLKWMGRTALELIGQGGLGYSFDKLVEDGDNEYGRALKHLQPTLQRINVLRRLIPYVYKLGPAWFRRMVMHYFPLGQVRDAKEIVDTMQRCSSEIFASKKIALARGDEAVMKQVGEGKDIMSILMKANSMASEADRIPEEELVAQMSTFLFAATDTTSNTLARILQQLAIHPDTQQKLREEILAANAEEYMAYDDLDALPLLDGVCRETLRVFPGVTNLARTPTQDTILPLSEPVVGTDGTVMREILVPRGTEILIGIQGSNGRKERWGEDSYEWKPERWLSPLPKTVTENPVPGVYSNLMTFMAGRRACIGFKFSEMEMKVVLAVLLSNFTFELTDKPIQWNISGVRYPTVGKDSNVAQLPLKVGLYKKPTLQ.

2 helical membrane passes run 6–23 (IPTQ…LFLL) and 106–124 (AFFA…ATAG). Cysteine 483 serves as a coordination point for heme. Asparagine 503 and asparagine 516 each carry an N-linked (GlcNAc...) asparagine glycan.

This sequence belongs to the cytochrome P450 family. Heme serves as cofactor.

It localises to the membrane. The protein operates within secondary metabolite biosynthesis. In terms of biological role, cytochrome P450 monooxygenase that is able to use dehydroabietic acid as a substrate for oxidation. The chain is Cytochrome P450 monooxygenase 81 from Postia placenta (strain ATCC 44394 / Madison 698-R) (Brown rot fungus).